A 227-amino-acid chain; its full sequence is Cytidylate kinase (227 aa).

12–20 (GPSGAGKGT) contacts ATP.

The protein belongs to the cytidylate kinase family. Type 1 subfamily.

The protein resides in the cytoplasm. It carries out the reaction CMP + ATP = CDP + ADP. The catalysed reaction is dCMP + ATP = dCDP + ADP. The chain is Cytidylate kinase from Citrobacter koseri (strain ATCC BAA-895 / CDC 4225-83 / SGSC4696).